The following is a 181-amino-acid chain: Peptidyl-tRNA hydrolase (181 aa).

Tyr-14 lines the tRNA pocket. His-19 acts as the Proton acceptor in catalysis. TRNA contacts are provided by Tyr-62, Asn-64, and Asn-108.

This sequence belongs to the PTH family. Monomer.

The protein resides in the cytoplasm. The catalysed reaction is an N-acyl-L-alpha-aminoacyl-tRNA + H2O = an N-acyl-L-amino acid + a tRNA + H(+). In terms of biological role, hydrolyzes ribosome-free peptidyl-tRNAs (with 1 or more amino acids incorporated), which drop off the ribosome during protein synthesis, or as a result of ribosome stalling. Catalyzes the release of premature peptidyl moieties from peptidyl-tRNA molecules trapped in stalled 50S ribosomal subunits, and thus maintains levels of free tRNAs and 50S ribosomes. The polypeptide is Peptidyl-tRNA hydrolase (Campylobacter jejuni subsp. jejuni serotype O:2 (strain ATCC 700819 / NCTC 11168)).